The chain runs to 486 residues: Serine/threonine-protein phosphatase 2A 56 kDa regulatory subunit alpha isoform (486 aa).

Residues 1–18 (MSSSSPPAGAASAAISAS) show a composition bias toward low complexity. A disordered region spans residues 1 to 52 (MSSSSPPAGAASAAISASEKVDGFTRKSVRKAQRQKRSQGSSQFRSQGSQAE). N-acetylserine is present on Ser-2. The segment covering 27 to 37 (KSVRKAQRQKR) has biased composition (basic residues). The segment covering 38–51 (SQGSSQFRSQGSQA) has biased composition (low complexity). A phosphoserine mark is found at Ser-41, Ser-42, and Ser-49.

The protein belongs to the phosphatase 2A regulatory subunit B56 family. In terms of assembly, PP2A consists of a common heterodimeric core enzyme, composed of a 36 kDa catalytic subunit (subunit C) and a 65 kDa constant regulatory subunit (PR65 or subunit A), that associates with a variety of regulatory subunits. Proteins that associate with the core dimer include three families of regulatory subunits B (the R2/B/PR55/B55, R3/B''/PR72/PR130/PR59 and R5/B'/B56 families), the 48 kDa variable regulatory subunit, viral proteins, and cell signaling molecules. Interacts with SGO1. In terms of processing, phosphorylated on serine residues. Widely expressed with the highest expression in heart and skeletal muscle.

It is found in the cytoplasm. The protein resides in the nucleus. The protein localises to the chromosome. It localises to the centromere. Functionally, the B regulatory subunit might modulate substrate selectivity and catalytic activity, and might also direct the localization of the catalytic enzyme to a particular subcellular compartment. This chain is Serine/threonine-protein phosphatase 2A 56 kDa regulatory subunit alpha isoform (PPP2R5A), found in Homo sapiens (Human).